We begin with the raw amino-acid sequence, 156 residues long: Regulatory protein RecX (156 aa).

This sequence belongs to the RecX family.

It is found in the cytoplasm. Its function is as follows. Modulates RecA activity. This Pseudomonas putida (strain W619) protein is Regulatory protein RecX.